A 73-amino-acid chain; its full sequence is Large ribosomal subunit protein bL31 (73 aa).

Belongs to the bacterial ribosomal protein bL31 family. Type A subfamily. In terms of assembly, part of the 50S ribosomal subunit.

Its function is as follows. Binds the 23S rRNA. The protein is Large ribosomal subunit protein bL31 of Bartonella tribocorum (strain CIP 105476 / IBS 506).